The following is a 415-amino-acid chain: Serine hydroxymethyltransferase (415 aa).

Residues Leu-121 and 125–127 (GHL) contribute to the (6S)-5,6,7,8-tetrahydrofolate site. At Lys-230 the chain carries N6-(pyridoxal phosphate)lysine. Residues Glu-246 and 354–356 (SPF) contribute to the (6S)-5,6,7,8-tetrahydrofolate site.

Belongs to the SHMT family. Homodimer. It depends on pyridoxal 5'-phosphate as a cofactor.

Its subcellular location is the cytoplasm. The enzyme catalyses (6R)-5,10-methylene-5,6,7,8-tetrahydrofolate + glycine + H2O = (6S)-5,6,7,8-tetrahydrofolate + L-serine. The protein operates within one-carbon metabolism; tetrahydrofolate interconversion. It functions in the pathway amino-acid biosynthesis; glycine biosynthesis; glycine from L-serine: step 1/1. In terms of biological role, catalyzes the reversible interconversion of serine and glycine with tetrahydrofolate (THF) serving as the one-carbon carrier. This reaction serves as the major source of one-carbon groups required for the biosynthesis of purines, thymidylate, methionine, and other important biomolecules. Also exhibits THF-independent aldolase activity toward beta-hydroxyamino acids, producing glycine and aldehydes, via a retro-aldol mechanism. The sequence is that of Serine hydroxymethyltransferase from Bdellovibrio bacteriovorus (strain ATCC 15356 / DSM 50701 / NCIMB 9529 / HD100).